The primary structure comprises 364 residues: uncharacterized protein (364 aa).

This is an uncharacterized protein from Escherichia coli (strain K12).